Reading from the N-terminus, the 1101-residue chain is Protein unc-13 homolog (1101 aa).

The MHD1 domain maps to 663–804 (VSVFPAADSL…ASKDDLVPPV (142 aa)). The MHD2 domain maps to 941-1051 (QSRLEGLIEA…YETRELIDDL (111 aa)).

This sequence belongs to the unc-13 family. Expressed in roots, cotyledons, leaves, stems and flowers. Expressed in guard cells and mesophyll cells of leaves.

It localises to the cytoplasm. The protein localises to the cell membrane. Functionally, controls the tethering of the proton ATPase AHA1 to the plasma membrane. Is essential for stomatal opening in response to low concentration of carbon dioxide and light. This chain is Protein unc-13 homolog, found in Arabidopsis thaliana (Mouse-ear cress).